The primary structure comprises 682 residues: Potassium-transporting ATPase ATP-binding subunit (682 aa).

The next 4 membrane-spanning stretches (helical) occupy residues 34–54 (PVMFIVWIGSLLTTCISIAMA), 62–82 (ALFSAAISGWLWVTVLFANFA), 219–239 (IALTILLIALTIVFLLATATL), and 254–274 (VLVALLVCLIPTTIGGLLSAI). Aspartate 307 acts as the 4-aspartylphosphate intermediate in catalysis. ATP-binding positions include aspartate 344, glutamate 348, 377–384 (FTAQSRMS), and lysine 395. Aspartate 518 and aspartate 522 together coordinate Mg(2+). The next 3 helical transmembrane spans lie at 588 to 608 (FAIIPAAFAATYPQLNALNIM), 616 to 636 (AILSAVIFNALIIVFLIPLAL), and 656 to 676 (IYGLGGLLVPFIGIKVIDLLL).

Belongs to the cation transport ATPase (P-type) (TC 3.A.3) family. Type IA subfamily. As to quaternary structure, the system is composed of three essential subunits: KdpA, KdpB and KdpC.

The protein resides in the cell inner membrane. It catalyses the reaction K(+)(out) + ATP + H2O = K(+)(in) + ADP + phosphate + H(+). Functionally, part of the high-affinity ATP-driven potassium transport (or Kdp) system, which catalyzes the hydrolysis of ATP coupled with the electrogenic transport of potassium into the cytoplasm. This subunit is responsible for energy coupling to the transport system and for the release of the potassium ions to the cytoplasm. The sequence is that of Potassium-transporting ATPase ATP-binding subunit from Shigella boydii serotype 4 (strain Sb227).